An 890-amino-acid polypeptide reads, in one-letter code: DNA mismatch repair protein MutS (890 aa).

607 to 614 (GPNMSGKS) provides a ligand contact to ATP. Residues 832–851 (ESQLSFFGTEQSSKKQDKPV) are disordered.

It belongs to the DNA mismatch repair MutS family.

This protein is involved in the repair of mismatches in DNA. It is possible that it carries out the mismatch recognition step. This protein has a weak ATPase activity. In Bacillus cereus (strain 03BB102), this protein is DNA mismatch repair protein MutS.